Reading from the N-terminus, the 300-residue chain is 17-beta-hydroxysteroid dehydrogenase 13 (300 aa).

Positions 1–19 (MNIILEILLLLITIIYSYL) are cleaved as a signal peptide. Position 33 is a phosphoserine (Ser33). NAD(+) is bound at residue 40–67 (LITGAGHGIGRQTTYEFAKRQSILVLWD). Ser172 serves as a coordination point for substrate. Residue Tyr185 is the Proton acceptor of the active site. Lys189 serves as a coordination point for NAD(+).

It belongs to the short-chain dehydrogenases/reductases (SDR) family. Highly expressed in the liver. Also detected in ovary, bone marrow, kidney, brain, lung, skeletal muscle, bladder and testis.

It is found in the lipid droplet. It localises to the endoplasmic reticulum. The protein localises to the cytoplasm. The enzyme catalyses 17beta-estradiol + NAD(+) = estrone + NADH + H(+). It carries out the reaction all-trans-retinol + NAD(+) = all-trans-retinal + NADH + H(+). It catalyses the reaction all-trans-retinal + NAD(+) + H2O = all-trans-retinoate + NADH + 2 H(+). Functionally, plays a pivotal role in hepatic lipid metabolism. In vitro, it catalyzes the oxidation of a variety of lipid substrates, including 17beta-estradiol, retinol, retinal, and leukotriene B4. In terms of biological role, has retinol/retinal dehydrogenase activity in vitro. Does not have retinol/retinal dehydrogenase activity in vitro. This Homo sapiens (Human) protein is 17-beta-hydroxysteroid dehydrogenase 13.